A 291-amino-acid polypeptide reads, in one-letter code: Quinol oxidase subunit 2 (291 aa).

The N-terminal stretch at methionine 1 to lysine 28 is a signal peptide. 2 consecutive transmembrane segments (helical) span residues serine 49–isoleucine 69 and leucine 91–valine 111.

Belongs to the cytochrome c oxidase subunit 2 family.

The protein resides in the cell membrane. The catalysed reaction is 2 a quinol + O2 = 2 a quinone + 2 H2O. Catalyzes quinol oxidation with the concomitant reduction of oxygen to water. Subunit II transfers the electrons from a quinol to the binuclear center of the catalytic subunit I. In Bacillus anthracis, this protein is Quinol oxidase subunit 2.